Consider the following 291-residue polypeptide: Nucleotide-binding protein lmo2474 (291 aa).

Position 13 to 20 (glycine 13 to threonine 20) interacts with ATP. Aspartate 63–glycine 66 is a GTP binding site.

It belongs to the RapZ-like family.

Its function is as follows. Displays ATPase and GTPase activities. This Listeria monocytogenes serovar 1/2a (strain ATCC BAA-679 / EGD-e) protein is Nucleotide-binding protein lmo2474.